The primary structure comprises 83 residues: Cytochrome c oxidase subunit 7A2, mitochondrial (83 aa).

The N-terminal 23 residues, M1–H23, are a transit peptide targeting the mitochondrion. Over F24 to G48 the chain is Mitochondrial matrix. K33 carries the N6-acetyllysine modification. Residues A49–A77 form a helical membrane-spanning segment. Residues F78 to N83 lie on the Mitochondrial intermembrane side of the membrane.

Belongs to the cytochrome c oxidase VIIa family. As to quaternary structure, component of the cytochrome c oxidase (complex IV, CIV), a multisubunit enzyme composed of 14 subunits. The complex is composed of a catalytic core of 3 subunits MT-CO1, MT-CO2 and MT-CO3, encoded in the mitochondrial DNA, and 11 supernumerary subunits COX4I, COX5A, COX5B, COX6A, COX6B, COX6C, COX7A, COX7B, COX7C, COX8 and NDUFA4, which are encoded in the nuclear genome. The complex exists as a monomer or a dimer and forms supercomplexes (SCs) in the inner mitochondrial membrane with NADH-ubiquinone oxidoreductase (complex I, CI) and ubiquinol-cytochrome c oxidoreductase (cytochrome b-c1 complex, complex III, CIII), resulting in different assemblies (supercomplex SCI(1)III(2)IV(1) and megacomplex MCI(2)III(2)IV(2)). Interacts with PET100.

It is found in the mitochondrion inner membrane. It participates in energy metabolism; oxidative phosphorylation. Its function is as follows. Component of the cytochrome c oxidase, the last enzyme in the mitochondrial electron transport chain which drives oxidative phosphorylation. The respiratory chain contains 3 multisubunit complexes succinate dehydrogenase (complex II, CII), ubiquinol-cytochrome c oxidoreductase (cytochrome b-c1 complex, complex III, CIII) and cytochrome c oxidase (complex IV, CIV), that cooperate to transfer electrons derived from NADH and succinate to molecular oxygen, creating an electrochemical gradient over the inner membrane that drives transmembrane transport and the ATP synthase. Cytochrome c oxidase is the component of the respiratory chain that catalyzes the reduction of oxygen to water. Electrons originating from reduced cytochrome c in the intermembrane space (IMS) are transferred via the dinuclear copper A center (CU(A)) of subunit 2 and heme A of subunit 1 to the active site in subunit 1, a binuclear center (BNC) formed by heme A3 and copper B (CU(B)). The BNC reduces molecular oxygen to 2 water molecules using 4 electrons from cytochrome c in the IMS and 4 protons from the mitochondrial matrix. In Mus musculus (Mouse), this protein is Cytochrome c oxidase subunit 7A2, mitochondrial (Cox7a2).